The following is a 365-amino-acid chain: Caffeic acid 3-O-methyltransferase (365 aa).

Asparagine 131 contributes to the (E)-ferulate binding site. The S-adenosyl-L-homocysteine site is built by glycine 208, aspartate 231, aspartate 251, methionine 252, methionine 264, and lysine 265. The Proton acceptor role is filled by histidine 269. Aspartate 270 serves as a coordination point for (E)-5-hydroxyferulate. Active-site residues include glutamate 297 and glutamate 329.

Belongs to the class I-like SAM-binding methyltransferase superfamily. Cation-independent O-methyltransferase family. COMT subfamily. As to quaternary structure, homodimer. More abundant in roots and stems.

The enzyme catalyses (E)-caffeate + S-adenosyl-L-methionine = (E)-ferulate + S-adenosyl-L-homocysteine + H(+). It catalyses the reaction (E)-5-hydroxyferulate + S-adenosyl-L-methionine = (E)-sinapate + S-adenosyl-L-homocysteine + H(+). It participates in aromatic compound metabolism; phenylpropanoid biosynthesis. Its function is as follows. Catalyzes the conversion of caffeic acid to ferulic acid and of 5-hydroxyferulic acid to sinapic acid. The resulting products may subsequently be converted to the corresponding alcohols that are incorporated into lignins. The polypeptide is Caffeic acid 3-O-methyltransferase (Medicago sativa (Alfalfa)).